Consider the following 449-residue polypeptide: MKKITKFKDQKILVLGLARSGMAAALVLNELGAIVTVNDGKPFEENKEAQVLLEEGIKVITGSHPIDLLDEDFALMVKNPGIRYDNPMVERAEALKIPVITEVELAYLVSEAPIIGITGTNGKTTTTTLIADILNADGQSAKLSGNIGFPASEVAQKAQATDTLVMELSSFQLMGIDTFRPKIALITNLFSAHLDYHGSQEAYEAAKWRIQENMTADDFLILNFNQEKCRKLADKTKATVLAFSTKEKVSGAYVNEGKIYFKDEFIMEASELSLPGDHNLENALAAIVASKLRGAENEAIIEVLTSFAGVKHRLQYLGEIDGRKVYNDSKATNILATQKALSGFDNSKLWLLAGGLDRGNGFEDLEKDLEDLKGMVVFGQTADKLRLMAEKLNIPVFASQNVATALKEIMPQTQVGDTILLSPACASWDQYKTFEERGDLFIEAFESLK.

ATP is bound at residue 119–125 (GTNGKTT).

Belongs to the MurCDEF family.

It is found in the cytoplasm. It carries out the reaction UDP-N-acetyl-alpha-D-muramoyl-L-alanine + D-glutamate + ATP = UDP-N-acetyl-alpha-D-muramoyl-L-alanyl-D-glutamate + ADP + phosphate + H(+). Its pathway is cell wall biogenesis; peptidoglycan biosynthesis. Its function is as follows. Cell wall formation. Catalyzes the addition of glutamate to the nucleotide precursor UDP-N-acetylmuramoyl-L-alanine (UMA). This Lactococcus lactis subsp. cremoris (strain SK11) protein is UDP-N-acetylmuramoylalanine--D-glutamate ligase.